Reading from the N-terminus, the 95-residue chain is Small ribosomal subunit protein mS37 (95 aa).

Positions 27–69 (ANKCLVLMSNLLQCWSSYGHMSPKCAGLVTELKSCTSESALGK) constitute a CHCH domain. 2 short sequence motifs (cx9C motif) span residues 30–40 (CLVLMSNLLQC) and 51–61 (CAGLVTELKSC). 2 disulfide bridges follow: Cys30–Cys61 and Cys40–Cys51.

The protein belongs to the mitochondrion-specific ribosomal protein mS37 family. Component of the mitochondrial small ribosomal subunit (mt-SSU). Mature yeast 74S mitochondrial ribosomes consist of a small (37S) and a large (54S) subunit. The 37S small subunit contains a 15S ribosomal RNA (15S mt-rRNA) and 34 different proteins. The 54S large subunit contains a 21S rRNA (21S mt-rRNA) and 46 different proteins.

It is found in the mitochondrion. The protein resides in the mitochondrion matrix. Component of the mitochondrial ribosome (mitoribosome), a dedicated translation machinery responsible for the synthesis of mitochondrial genome-encoded proteins, including at least some of the essential transmembrane subunits of the mitochondrial respiratory chain. The mitoribosomes are attached to the mitochondrial inner membrane and translation products are cotranslationally integrated into the membrane. The polypeptide is Small ribosomal subunit protein mS37 (MRP10) (Saccharomyces cerevisiae (strain ATCC 204508 / S288c) (Baker's yeast)).